Reading from the N-terminus, the 152-residue chain is Transcriptional regulator MraZ (152 aa).

SpoVT-AbrB domains are found at residues 5–52 and 81–124; these read ATMV…PLPE and ASEC…DEQT.

It belongs to the MraZ family. Forms oligomers.

Its subcellular location is the cytoplasm. The protein resides in the nucleoid. Its function is as follows. Negatively regulates its own expression and that of the subsequent genes in the proximal part of the division and cell wall (dcw) gene cluster. Acts by binding directly to DNA. May also regulate the expression of genes outside the dcw cluster. The sequence is that of Transcriptional regulator MraZ from Yersinia pestis bv. Antiqua (strain Antiqua).